Consider the following 258-residue polypeptide: Indole-3-glycerol phosphate synthase (258 aa).

The protein belongs to the TrpC family.

The enzyme catalyses 1-(2-carboxyphenylamino)-1-deoxy-D-ribulose 5-phosphate + H(+) = (1S,2R)-1-C-(indol-3-yl)glycerol 3-phosphate + CO2 + H2O. It functions in the pathway amino-acid biosynthesis; L-tryptophan biosynthesis; L-tryptophan from chorismate: step 4/5. The protein is Indole-3-glycerol phosphate synthase of Geobacillus kaustophilus (strain HTA426).